The primary structure comprises 264 residues: Thymidylate synthase (264 aa).

Arg21 is a dUMP binding site. Position 51 (His51) interacts with (6R)-5,10-methylene-5,6,7,8-tetrahydrofolate. A dUMP-binding site is contributed by 126-127 (RR). Cys146 (nucleophile) is an active-site residue. DUMP contacts are provided by residues 166–169 (RSCD), Asn177, and 207–209 (HLY). Asp169 serves as a coordination point for (6R)-5,10-methylene-5,6,7,8-tetrahydrofolate. Ala263 lines the (6R)-5,10-methylene-5,6,7,8-tetrahydrofolate pocket.

It belongs to the thymidylate synthase family. Bacterial-type ThyA subfamily. Homodimer.

Its subcellular location is the cytoplasm. It catalyses the reaction dUMP + (6R)-5,10-methylene-5,6,7,8-tetrahydrofolate = 7,8-dihydrofolate + dTMP. It participates in pyrimidine metabolism; dTTP biosynthesis. Its function is as follows. Catalyzes the reductive methylation of 2'-deoxyuridine-5'-monophosphate (dUMP) to 2'-deoxythymidine-5'-monophosphate (dTMP) while utilizing 5,10-methylenetetrahydrofolate (mTHF) as the methyl donor and reductant in the reaction, yielding dihydrofolate (DHF) as a by-product. This enzymatic reaction provides an intracellular de novo source of dTMP, an essential precursor for DNA biosynthesis. The polypeptide is Thymidylate synthase (Pectobacterium atrosepticum (strain SCRI 1043 / ATCC BAA-672) (Erwinia carotovora subsp. atroseptica)).